A 492-amino-acid polypeptide reads, in one-letter code: Trehalose-phosphatase (492 aa).

The tract at residues 1 to 55 (MTETVTDQGKQRSSKLQKNEAAKDEQVEGKGKETLESGTDKSAEQNSSLLVGQPD) is disordered. Residues 17-43 (QKNEAAKDEQVEGKGKETLESGTDKSA) show a composition bias toward basic and acidic residues. Residues Asp213 and Asp215 each contribute to the Mg(2+) site. The active-site Proton donor/acceptor is Asp215. 332–334 (QRK) lines the substrate pocket. Asp424 provides a ligand contact to Mg(2+).

This sequence belongs to the gob-1 trehalose phosphatase family. Mg(2+) serves as cofactor.

It catalyses the reaction alpha,alpha-trehalose 6-phosphate + H2O = alpha,alpha-trehalose + phosphate. Its activity is regulated as follows. Inhibited by trehalose 6-sulfate. Its function is as follows. Catalyzes the hydrolysis of trehalose 6-phosphate to trehalose and phosphate; prevents the accumulation of toxic levels of trehalose 6-phosphate. In Brugia malayi (Filarial nematode worm), this protein is Trehalose-phosphatase.